The chain runs to 215 residues: Orotate phosphoribosyltransferase (215 aa).

Lys26 provides a ligand contact to 5-phospho-alpha-D-ribose 1-diphosphate. 34–35 (FF) lines the orotate pocket. Residues 72–73 (YK), Arg99, Lys100, Lys103, His105, and 124–132 (DDVITAGTA) contribute to the 5-phospho-alpha-D-ribose 1-diphosphate site. Residues Thr128 and Arg156 each contribute to the orotate site.

Belongs to the purine/pyrimidine phosphoribosyltransferase family. PyrE subfamily. Homodimer. It depends on Mg(2+) as a cofactor.

The enzyme catalyses orotidine 5'-phosphate + diphosphate = orotate + 5-phospho-alpha-D-ribose 1-diphosphate. It participates in pyrimidine metabolism; UMP biosynthesis via de novo pathway; UMP from orotate: step 1/2. Catalyzes the transfer of a ribosyl phosphate group from 5-phosphoribose 1-diphosphate to orotate, leading to the formation of orotidine monophosphate (OMP). The protein is Orotate phosphoribosyltransferase of Hahella chejuensis (strain KCTC 2396).